The sequence spans 328 residues: Probable magnesium transporter NIPA6 (328 aa).

Residues 1–4 (METD) lie on the Extracellular side of the membrane. Residues 5–25 (NGKGLILAVASSVFIGSSFIL) traverse the membrane as a helical segment. Over 26 to 51 (KKKGLKRAGAIGTRAGYGGYTYLLEP) the chain is Cytoplasmic. Residues 52 to 72 (LWWAGMVTMIVGEAANFVAYI) form a helical membrane-spanning segment. Topologically, residues 73–76 (YAPA) are extracellular. A helical membrane pass occupies residues 77-97 (VLVTPLGALSIIISAVLAHFL). Topologically, residues 98–104 (LKEKLKK) are cytoplasmic. A helical membrane pass occupies residues 105–125 (MGVLGCVSCIVGSVVIVIHAP). Topologically, residues 126-142 (KEQTPNSVEEIWNLATQ) are extracellular. Residues 143 to 163 (PAFLIYVAITMSIVLALILHF) traverse the membrane as a helical segment. Over 164-175 (EPLCGQTNILVY) the chain is Cytoplasmic. The helical transmembrane segment at 176-196 (IGICSLMGALTVMSIKAIGIA) threads the bilayer. The Extracellular segment spans residues 197–209 (IKLTMEGVSQIGY). Residues 210–230 (PQTWLFVMVAVTCVVTQLIYL) form a helical membrane-spanning segment. Over 231 to 240 (NKALDTFNAA) the chain is Cytoplasmic. Residues 241 to 261 (IVSPVYYVMFTTLTIVASAIM) traverse the membrane as a helical segment. At 262 to 269 (FKDWSGQD) the chain is on the extracellular side. Residues 270-290 (AASVASELCGFITVLTGTMIL) form a helical membrane-spanning segment. At 291 to 328 (HGTREEEQQQASSEHVRWYDSRKSMNEEHLVSLYSPEY) the chain is on the cytoplasmic side.

This sequence belongs to the NIPA (TC 2.A.7) family. As to quaternary structure, homodimer.

The protein localises to the cell membrane. Its subcellular location is the early endosome. Acts as a Mg(2+) transporter. Can also transport other divalent cations such as Fe(2+), Sr(2+), Ba(2+), Mn(2+) and Co(2+) but to a much less extent than Mg(2+). This Arabidopsis thaliana (Mouse-ear cress) protein is Probable magnesium transporter NIPA6.